Here is a 497-residue protein sequence, read N- to C-terminus: Probable malate:quinone oxidoreductase (497 aa).

The protein belongs to the MQO family. Requires FAD as cofactor.

It carries out the reaction (S)-malate + a quinone = a quinol + oxaloacetate. It functions in the pathway carbohydrate metabolism; tricarboxylic acid cycle; oxaloacetate from (S)-malate (quinone route): step 1/1. The sequence is that of Probable malate:quinone oxidoreductase from Flavobacterium johnsoniae (strain ATCC 17061 / DSM 2064 / JCM 8514 / BCRC 14874 / CCUG 350202 / NBRC 14942 / NCIMB 11054 / UW101) (Cytophaga johnsonae).